The sequence spans 201 residues: Small ribosomal subunit protein uS4 (201 aa).

An S4 RNA-binding domain is found at 91–151; it reads ARLDNVIYRA…DRSRSMLWFD (61 aa).

Belongs to the universal ribosomal protein uS4 family. In terms of assembly, part of the 30S ribosomal subunit. Contacts protein S5. The interaction surface between S4 and S5 is involved in control of translational fidelity.

Its function is as follows. One of the primary rRNA binding proteins, it binds directly to 16S rRNA where it nucleates assembly of the body of the 30S subunit. In terms of biological role, with S5 and S12 plays an important role in translational accuracy. The polypeptide is Small ribosomal subunit protein uS4 (Corynebacterium urealyticum (strain ATCC 43042 / DSM 7109)).